A 114-amino-acid polypeptide reads, in one-letter code: NADH-ubiquinone oxidoreductase chain 3 (114 aa).

Helical transmembrane passes span 4 to 24 (LVYI…SYLL), 55 to 75 (FYLI…ILPF), and 82 to 102 (VSLL…IGFI).

Belongs to the complex I subunit 3 family.

The protein localises to the mitochondrion membrane. It catalyses the reaction a ubiquinone + NADH + 5 H(+)(in) = a ubiquinol + NAD(+) + 4 H(+)(out). Its function is as follows. Core subunit of the mitochondrial membrane respiratory chain NADH dehydrogenase (Complex I) that is believed to belong to the minimal assembly required for catalysis. Complex I functions in the transfer of electrons from NADH to the respiratory chain. The immediate electron acceptor for the enzyme is believed to be ubiquinone. This is NADH-ubiquinone oxidoreductase chain 3 (ND3) from Allomyces macrogynus.